The primary structure comprises 389 residues: tRNA-specific 2-thiouridylase MnmA (389 aa).

Residues 33–40 and Leu-59 each bind ATP; that span reads GLSGGVDS. The Nucleophile role is filled by Cys-120. Cysteines 120 and 219 form a disulfide. ATP is bound at residue Gly-145. The interaction with tRNA stretch occupies residues 169 to 171; the sequence is KDQ. Cys-219 acts as the Cysteine persulfide intermediate in catalysis. Residues 326-327 are interaction with tRNA; sequence RY.

Belongs to the MnmA/TRMU family.

The protein resides in the cytoplasm. It catalyses the reaction S-sulfanyl-L-cysteinyl-[protein] + uridine(34) in tRNA + AH2 + ATP = 2-thiouridine(34) in tRNA + L-cysteinyl-[protein] + A + AMP + diphosphate + H(+). Catalyzes the 2-thiolation of uridine at the wobble position (U34) of tRNA, leading to the formation of s(2)U34. The polypeptide is tRNA-specific 2-thiouridylase MnmA (Synechococcus sp. (strain WH7803)).